Consider the following 128-residue polypeptide: MDIIREIESEMLRKDIPDFKPGDTVRVYFKVIEGGRERVQAFEGLVIKRRGKGLSETFTVRRISYGIGVERVFPLHSPRLEKIEVIRRGKVRRAKLYYIREKIGKAAKIKELVQQPDKENNNTEETNA.

The protein belongs to the bacterial ribosomal protein bL19 family.

Its function is as follows. This protein is located at the 30S-50S ribosomal subunit interface and may play a role in the structure and function of the aminoacyl-tRNA binding site. This is Large ribosomal subunit protein bL19 from Caldicellulosiruptor bescii (strain ATCC BAA-1888 / DSM 6725 / KCTC 15123 / Z-1320) (Anaerocellum thermophilum).